Reading from the N-terminus, the 382-residue chain is uncharacterized protein (382 aa).

Transmembrane regions (helical) follow at residues 8 to 28, 41 to 61, 73 to 93, 94 to 114, 133 to 153, 157 to 177, 208 to 228, 235 to 255, 274 to 294, 295 to 315, 325 to 345, and 349 to 369; these read VLLL…LNTL, WQVG…TLIA, SYHY…LSVD, FWSW…IWVI, AAYM…LGVV, LLSV…PLLF, GCII…LYLS, ASVG…QWPI, VVIL…ALFI, LGCA…EKVS, ALLM…SLLM, and SDNL…MMLL.

It belongs to the major facilitator superfamily. YcaD (TC 2.A.1.26) family.

It localises to the cell inner membrane. This is an uncharacterized protein from Yersinia enterocolitica serotype O:8 / biotype 1B (strain NCTC 13174 / 8081).